We begin with the raw amino-acid sequence, 429 residues long: MHVQSQASSDDFFLQGVGSADPAVAEILAGELKRQQDQIELIASENIVSKAVLDAQGSVLTNKYAEGYPGKRYYGGCEVVDEVERLAIERAKQLFGCEHANVQPHSGSQANQAVFMVTMTPGDTFMGMNLDHGGHLTHGKSVNQSGKWFSPVAYGVRAQDHLIDYDEAYEVAKANNPKVIIAGGSAYSRHIDFKKFREIADEVGAILMCDVAHYAGLIVAGEYPNPFPHAHIVTTTTHKTLRGPRGGMILTNDKKLAKKIDSAVFPGLQGGPLMHVIAAKAVAFGEALKPEFKQYARQVIENARALAESLQSVGFKIVSNGTDSHLMLVDLTPKGVSGADAEIALERAGITTNKNSIPGDPLPPMQTSGLRVGTPAGTTRGFGPGEFRQVGKWIGEVLDAVASGEDPTPVEQKVRGEVLALTKRFPIYS.

(6S)-5,6,7,8-tetrahydrofolate is bound by residues leucine 130 and 134–136 (GHL). Residue lysine 239 is modified to N6-(pyridoxal phosphate)lysine.

Belongs to the SHMT family. In terms of assembly, homodimer. The cofactor is pyridoxal 5'-phosphate.

Its subcellular location is the cytoplasm. The enzyme catalyses (6R)-5,10-methylene-5,6,7,8-tetrahydrofolate + glycine + H2O = (6S)-5,6,7,8-tetrahydrofolate + L-serine. It functions in the pathway one-carbon metabolism; tetrahydrofolate interconversion. Its pathway is amino-acid biosynthesis; glycine biosynthesis; glycine from L-serine: step 1/1. Functionally, catalyzes the reversible interconversion of serine and glycine with tetrahydrofolate (THF) serving as the one-carbon carrier. This reaction serves as the major source of one-carbon groups required for the biosynthesis of purines, thymidylate, methionine, and other important biomolecules. Also exhibits THF-independent aldolase activity toward beta-hydroxyamino acids, producing glycine and aldehydes, via a retro-aldol mechanism. This is Serine hydroxymethyltransferase from Phenylobacterium zucineum (strain HLK1).